The following is a 287-amino-acid chain: Ribonuclease HII (287 aa).

The RNase H type-2 domain occupies 61–287; the sequence is ALQIGVDEAG…FAPVRKALES (227 aa). 3 residues coordinate a divalent metal cation: Asp67, Glu68, and Asp186.

This sequence belongs to the RNase HII family. Mn(2+) is required as a cofactor. The cofactor is Mg(2+).

Its subcellular location is the cytoplasm. It carries out the reaction Endonucleolytic cleavage to 5'-phosphomonoester.. Its function is as follows. Endonuclease that specifically degrades the RNA of RNA-DNA hybrids. The polypeptide is Ribonuclease HII (Psychrobacter arcticus (strain DSM 17307 / VKM B-2377 / 273-4)).